A 274-amino-acid polypeptide reads, in one-letter code: Penicillin-insensitive murein endopeptidase (274 aa).

An N-terminal signal peptide occupies residues 1–19; the sequence is MNKTAIALLALLASSVSLA. 3 cysteine pairs are disulfide-bonded: C44–C265, C187–C235, and C216–C223. The Zn(2+) site is built by H110, H113, D120, D147, H150, and H211. The disordered stretch occupies residues 227–274; it reads PLPPPGDGCGAELQSWFEPPKPGTTKPEKKTPPPLPPSCQALLDEHVI.

Belongs to the peptidase M74 family. As to quaternary structure, dimer. Zn(2+) serves as cofactor.

Its subcellular location is the periplasm. Functionally, murein endopeptidase that cleaves the D-alanyl-meso-2,6-diamino-pimelyl amide bond that connects peptidoglycan strands. Likely plays a role in the removal of murein from the sacculus. This is Penicillin-insensitive murein endopeptidase from Shigella dysenteriae serotype 1 (strain Sd197).